A 183-amino-acid chain; its full sequence is dCTP deaminase (183 aa).

DCTP contacts are provided by residues 106–111, 130–132, Q151, Y165, and Q175; these read KSTYAR and TLE. E132 functions as the Proton donor/acceptor in the catalytic mechanism.

Belongs to the dCTP deaminase family. Homotrimer.

The enzyme catalyses dCTP + H2O + H(+) = dUTP + NH4(+). It functions in the pathway pyrimidine metabolism; dUMP biosynthesis; dUMP from dCTP (dUTP route): step 1/2. Functionally, catalyzes the deamination of dCTP to dUTP. The sequence is that of dCTP deaminase from Acidobacterium capsulatum (strain ATCC 51196 / DSM 11244 / BCRC 80197 / JCM 7670 / NBRC 15755 / NCIMB 13165 / 161).